A 245-amino-acid chain; its full sequence is 1-(5-phosphoribosyl)-5-[(5-phosphoribosylamino)methylideneamino] imidazole-4-carboxamide isomerase (245 aa).

The Proton acceptor role is filled by aspartate 11. Residue aspartate 132 is the Proton donor of the active site.

Belongs to the HisA/HisF family.

The protein localises to the cytoplasm. The catalysed reaction is 1-(5-phospho-beta-D-ribosyl)-5-[(5-phospho-beta-D-ribosylamino)methylideneamino]imidazole-4-carboxamide = 5-[(5-phospho-1-deoxy-D-ribulos-1-ylimino)methylamino]-1-(5-phospho-beta-D-ribosyl)imidazole-4-carboxamide. The protein operates within amino-acid biosynthesis; L-histidine biosynthesis; L-histidine from 5-phospho-alpha-D-ribose 1-diphosphate: step 4/9. The sequence is that of 1-(5-phosphoribosyl)-5-[(5-phosphoribosylamino)methylideneamino] imidazole-4-carboxamide isomerase from Geobacillus thermodenitrificans (strain NG80-2).